The following is a 207-amino-acid chain: Vascular endothelial growth factor B (207 aa).

Residues 1–21 form the signal peptide; sequence MSPLLRRLLLVALLQLACTQA. 2 disulfide bridges follow: Cys-78–Cys-122 and Cys-82–Cys-124. The tract at residues 140–182 is disordered; sequence IPHHRPQPRSVLSWDSAPGASSPADIIHPTPAPGPSAHAAPSA.

This sequence belongs to the PDGF/VEGF growth factor family. In terms of assembly, homodimer; disulfide-linked. Can also form heterodimer with VEGF.

It is found in the secreted. Its function is as follows. Growth factor for endothelial cells. VEGF-B167 binds heparin and neuropilin-1 whereas the binding to neuropilin-1 of VEGF-B186 is regulated by proteolysis. This is Vascular endothelial growth factor B (Vegfb) from Rattus norvegicus (Rat).